We begin with the raw amino-acid sequence, 508 residues long: Hydroxymethylglutaryl-CoA synthase, mitochondrial (508 aa).

The transit peptide at 1 to 37 (MQRLLTPVRQVLQVKRVMQEASLLPARLLPAAHPSFS) directs the protein to the mitochondrion. Lysine 52 is subject to N6-succinyllysine. Glutamate 80 and alanine 81 together coordinate (3S)-3-hydroxy-3-methylglutaryl-CoA. The active-site Proton donor/acceptor is the glutamate 132. (3S)-3-hydroxy-3-methylglutaryl-CoA-binding residues include cysteine 166, asparagine 204, and threonine 208. The active-site Acyl-thioester intermediate is the cysteine 166. Lysine 243 bears the N6-acetyllysine mark. Lysine 256 is subject to N6-acetyllysine; alternate. Lysine 256 bears the N6-succinyllysine; alternate mark. Positions 258 and 301 each coordinate (3S)-3-hydroxy-3-methylglutaryl-CoA. Histidine 301 functions as the Proton donor/acceptor in the catalytic mechanism. N6-acetyllysine is present on lysine 306. Residue lysine 310 participates in (3S)-3-hydroxy-3-methylglutaryl-CoA binding. At lysine 310 the chain carries N6-acetyllysine; alternate. Position 310 is an N6-succinyllysine; alternate (lysine 310). Lysine 333 carries the N6-succinyllysine modification. 4 positions are modified to N6-acetyllysine; alternate: lysine 342, lysine 350, lysine 354, and lysine 358. N6-succinyllysine; alternate occurs at positions 342, 350, 354, and 358. 2 residues coordinate (3S)-3-hydroxy-3-methylglutaryl-CoA: asparagine 380 and serine 414. A Phosphoserine modification is found at serine 433. Lysine 437 is modified (N6-acetyllysine). A Phosphoserine modification is found at serine 440. Lysine 447 is subject to N6-acetyllysine; alternate. Lysine 447 bears the N6-succinyllysine; alternate mark. Phosphoserine is present on serine 456. Lysine 473 bears the N6-acetyllysine; alternate mark. At lysine 473 the chain carries N6-succinyllysine; alternate. A Phosphoserine modification is found at serine 477.

This sequence belongs to the thiolase-like superfamily. HMG-CoA synthase family. In terms of assembly, homodimer. Succinylated. Desuccinylated by SIRT5. Succinylation, at least at Lys-310, inhibits the enzymatic activity.

Its subcellular location is the mitochondrion. It catalyses the reaction acetoacetyl-CoA + acetyl-CoA + H2O = (3S)-3-hydroxy-3-methylglutaryl-CoA + CoA + H(+). It functions in the pathway metabolic intermediate biosynthesis; (R)-mevalonate biosynthesis; (R)-mevalonate from acetyl-CoA: step 2/3. Its function is as follows. Catalyzes the first irreversible step in ketogenesis, condensing acetyl-CoA to acetoacetyl-CoA to form HMG-CoA, which is converted by HMG-CoA reductase (HMGCR) into mevalonate. In Bos taurus (Bovine), this protein is Hydroxymethylglutaryl-CoA synthase, mitochondrial (HMGCS2).